The chain runs to 722 residues: Zinc finger BED domain-containing protein RICESLEEPER 2 (722 aa).

Residues Arg66–Ala134 form a BED-type zinc finger. Zn(2+)-binding residues include Cys89, Cys92, His113, and His127. A disordered region spans residues Val572–Pro592. Residues Asp576–Pro592 are compositionally biased toward polar residues. Positions Glu617–Leu702 are HATC (Hobo-Ac-Tam3) domain.

In terms of assembly, homodimer.

Its subcellular location is the nucleus. Transposase-like protein that is essential for plant growth and development. May regulate global gene expression by recruiting other cellular factors. This is Zinc finger BED domain-containing protein RICESLEEPER 2 from Oryza sativa subsp. japonica (Rice).